The sequence spans 181 residues: Adenylate kinase (181 aa).

10 to 15 (GAGKGT) is a binding site for ATP. An NMP region spans residues 30–59 (STGELFRSNIENGTKLGLEAKRYLDAGDLV). AMP-binding positions include Thr-31, Arg-36, 57–59 (DLV), 85–88 (GFPR), and Gln-92. The tract at residues 126–132 (ARGRADD) is LID. Arg-127 provides a ligand contact to ATP. AMP is bound by residues Arg-129 and Arg-140. Gly-166 is an ATP binding site.

The protein belongs to the adenylate kinase family. In terms of assembly, monomer.

It localises to the cytoplasm. It catalyses the reaction AMP + ATP = 2 ADP. It functions in the pathway purine metabolism; AMP biosynthesis via salvage pathway; AMP from ADP: step 1/1. Functionally, catalyzes the reversible transfer of the terminal phosphate group between ATP and AMP. Plays an important role in cellular energy homeostasis and in adenine nucleotide metabolism. This is Adenylate kinase from Mycolicibacterium paratuberculosis (strain ATCC BAA-968 / K-10) (Mycobacterium paratuberculosis).